The chain runs to 284 residues: Diaminopimelate epimerase (284 aa).

Substrate is bound by residues Asn13 and Asn70. The active-site Proton donor is Cys79. Substrate contacts are provided by residues 80–81, Asn167, Asn200, and 218–219; these read GN and ER. The Proton acceptor role is filled by Cys227. 228–229 serves as a coordination point for substrate; that stretch reads GT.

It belongs to the diaminopimelate epimerase family. Homodimer.

It localises to the cytoplasm. It carries out the reaction (2S,6S)-2,6-diaminopimelate = meso-2,6-diaminopimelate. Its pathway is amino-acid biosynthesis; L-lysine biosynthesis via DAP pathway; DL-2,6-diaminopimelate from LL-2,6-diaminopimelate: step 1/1. Functionally, catalyzes the stereoinversion of LL-2,6-diaminopimelate (L,L-DAP) to meso-diaminopimelate (meso-DAP), a precursor of L-lysine and an essential component of the bacterial peptidoglycan. This chain is Diaminopimelate epimerase, found in Prochlorococcus marinus (strain NATL2A).